The chain runs to 101 residues: Small ribosomal subunit protein uS14 (101 aa).

Belongs to the universal ribosomal protein uS14 family. Part of the 30S ribosomal subunit. Contacts proteins S3 and S10.

Its function is as follows. Binds 16S rRNA, required for the assembly of 30S particles and may also be responsible for determining the conformation of the 16S rRNA at the A site. This Pseudoalteromonas atlantica (strain T6c / ATCC BAA-1087) protein is Small ribosomal subunit protein uS14.